Reading from the N-terminus, the 179-residue chain is Large ribosomal subunit protein eL18 (179 aa).

This sequence belongs to the eukaryotic ribosomal protein eL18 family. In terms of assembly, component of the large ribosomal subunit.

The protein resides in the cytoplasm. It is found in the cytosol. It localises to the rough endoplasmic reticulum. In terms of biological role, component of the large ribosomal subunit. The ribosome is a large ribonucleoprotein complex responsible for the synthesis of proteins in the cell. This is Large ribosomal subunit protein eL18 (rpl18) from Salmo salar (Atlantic salmon).